The chain runs to 125 residues: Nuclear envelope phosphatase-regulatory subunit 1 (125 aa).

M1 bears the N-acetylmethionine mark. The next 2 membrane-spanning stretches (helical) occupy residues 33 to 53 (MLLI…LIDP) and 65 to 85 (WNHP…FAGI).

This sequence belongs to the CNEP1R1 family. In terms of assembly, interacts with CTDNEP1; the complex dephosphorylates LPIN1 and LPIN2.

Its subcellular location is the nucleus membrane. It localises to the cytoplasm. Forms with the serine/threonine protein phosphatase CTDNEP1 an active complex which dephosphorylates and may activate LPIN1 and LPIN2. LPIN1 and LPIN2 are phosphatidate phosphatases that catalyze the conversion of phosphatidic acid to diacylglycerol and control the metabolism of fatty acids at different levels. May indirectly modulate the lipid composition of nuclear and/or endoplasmic reticulum membranes and be required for proper nuclear membrane morphology and/or dynamics. May also indirectly regulate the production of lipid droplets and triacylglycerol. This Bos taurus (Bovine) protein is Nuclear envelope phosphatase-regulatory subunit 1 (CNEP1R1).